Reading from the N-terminus, the 78-residue chain is Small ribosomal subunit protein uS17 (78 aa).

This sequence belongs to the universal ribosomal protein uS17 family. As to quaternary structure, part of the 30S ribosomal subunit.

Its function is as follows. One of the primary rRNA binding proteins, it binds specifically to the 5'-end of 16S ribosomal RNA. The protein is Small ribosomal subunit protein uS17 of Wolbachia pipientis wMel.